We begin with the raw amino-acid sequence, 346 residues long: Methylthioribose-1-phosphate isomerase (346 aa).

Residues 47–49 (RGA), Arg-88, and Gln-195 contribute to the substrate site. Asp-236 (proton donor) is an active-site residue. A substrate-binding site is contributed by 246 to 247 (NK).

The protein belongs to the eIF-2B alpha/beta/delta subunits family. MtnA subfamily.

It carries out the reaction 5-(methylsulfanyl)-alpha-D-ribose 1-phosphate = 5-(methylsulfanyl)-D-ribulose 1-phosphate. It functions in the pathway amino-acid biosynthesis; L-methionine biosynthesis via salvage pathway; L-methionine from S-methyl-5-thio-alpha-D-ribose 1-phosphate: step 1/6. In terms of biological role, catalyzes the interconversion of methylthioribose-1-phosphate (MTR-1-P) into methylthioribulose-1-phosphate (MTRu-1-P). The chain is Methylthioribose-1-phosphate isomerase from Maridesulfovibrio salexigens (strain ATCC 14822 / DSM 2638 / NCIMB 8403 / VKM B-1763) (Desulfovibrio salexigens).